A 215-amino-acid polypeptide reads, in one-letter code: Cytochrome b6 (215 aa).

Residues isoleucine 32–phenylalanine 52 traverse the membrane as a helical segment. Position 35 (cysteine 35) interacts with heme c. Heme b is bound by residues histidine 86 and histidine 100. The next 3 helical transmembrane spans lie at alanine 90–phenylalanine 110, leucine 116–tyrosine 136, and leucine 186–isoleucine 206. The heme b site is built by histidine 187 and histidine 202.

This sequence belongs to the cytochrome b family. PetB subfamily. As to quaternary structure, the 4 large subunits of the cytochrome b6-f complex are cytochrome b6, subunit IV (17 kDa polypeptide, PetD), cytochrome f and the Rieske protein, while the 4 small subunits are PetG, PetL, PetM and PetN. The complex functions as a dimer. The cofactor is heme b. Requires heme c as cofactor.

The protein localises to the plastid. Its subcellular location is the chloroplast thylakoid membrane. In terms of biological role, component of the cytochrome b6-f complex, which mediates electron transfer between photosystem II (PSII) and photosystem I (PSI), cyclic electron flow around PSI, and state transitions. This is Cytochrome b6 from Stigeoclonium helveticum (Green alga).